We begin with the raw amino-acid sequence, 72 residues long: Translation initiation factor IF-1 (72 aa).

Positions 1 to 72 (MAKEETIQMQ…TRARITFRTK (72 aa)) constitute an S1-like domain.

It belongs to the IF-1 family. Component of the 30S ribosomal translation pre-initiation complex which assembles on the 30S ribosome in the order IF-2 and IF-3, IF-1 and N-formylmethionyl-tRNA(fMet); mRNA recruitment can occur at any time during PIC assembly.

The protein localises to the cytoplasm. In terms of biological role, one of the essential components for the initiation of protein synthesis. Stabilizes the binding of IF-2 and IF-3 on the 30S subunit to which N-formylmethionyl-tRNA(fMet) subsequently binds. Helps modulate mRNA selection, yielding the 30S pre-initiation complex (PIC). Upon addition of the 50S ribosomal subunit IF-1, IF-2 and IF-3 are released leaving the mature 70S translation initiation complex. The chain is Translation initiation factor IF-1 from Nitrosomonas eutropha (strain DSM 101675 / C91 / Nm57).